A 395-amino-acid polypeptide reads, in one-letter code: Argininosuccinate synthase (395 aa).

8-16 is a binding site for ATP; it reads AYSGGLDTS. An L-citrulline-binding site is contributed by Y86. Residue G116 coordinates ATP. Residues T118, N122, and D123 each coordinate L-aspartate. N122 is an L-citrulline binding site. The L-citrulline site is built by R126, S173, S182, E257, and Y269.

The protein belongs to the argininosuccinate synthase family. Type 1 subfamily. As to quaternary structure, homotetramer.

The protein localises to the cytoplasm. The catalysed reaction is L-citrulline + L-aspartate + ATP = 2-(N(omega)-L-arginino)succinate + AMP + diphosphate + H(+). Its pathway is amino-acid biosynthesis; L-arginine biosynthesis; L-arginine from L-ornithine and carbamoyl phosphate: step 2/3. The sequence is that of Argininosuccinate synthase from Methanocaldococcus jannaschii (strain ATCC 43067 / DSM 2661 / JAL-1 / JCM 10045 / NBRC 100440) (Methanococcus jannaschii).